A 98-amino-acid polypeptide reads, in one-letter code: NADH-ubiquinone oxidoreductase chain 4L (98 aa).

The next 3 helical transmembrane spans lie at methionine 1–leucine 21, serine 29–leucine 49, and isoleucine 61–valine 81.

This sequence belongs to the complex I subunit 4L family. Core subunit of respiratory chain NADH dehydrogenase (Complex I) which is composed of 45 different subunits.

It is found in the mitochondrion inner membrane. The enzyme catalyses a ubiquinone + NADH + 5 H(+)(in) = a ubiquinol + NAD(+) + 4 H(+)(out). In terms of biological role, core subunit of the mitochondrial membrane respiratory chain NADH dehydrogenase (Complex I) which catalyzes electron transfer from NADH through the respiratory chain, using ubiquinone as an electron acceptor. Part of the enzyme membrane arm which is embedded in the lipid bilayer and involved in proton translocation. The protein is NADH-ubiquinone oxidoreductase chain 4L (MT-ND4L) of Rhinolophus monoceros (Formosan lesser horseshoe bat).